Consider the following 62-residue polypeptide: UPF0434 protein Rleg2_3773 (62 aa).

It belongs to the UPF0434 family.

The protein is UPF0434 protein Rleg2_3773 of Rhizobium leguminosarum bv. trifolii (strain WSM2304).